Reading from the N-terminus, the 242-residue chain is Large ribosomal subunit protein uL3 (242 aa).

The disordered stretch occupies residues 131–165 (GRATHGNSVSHRTHGSTGQRQDPGKVFKGKKMAGH). Residues 135–150 (HGNSVSHRTHGSTGQR) are compositionally biased toward polar residues. Glutamine 151 is subject to N5-methylglutamine.

It belongs to the universal ribosomal protein uL3 family. Part of the 50S ribosomal subunit. Forms a cluster with proteins L14 and L19. Methylated by PrmB.

One of the primary rRNA binding proteins, it binds directly near the 3'-end of the 23S rRNA, where it nucleates assembly of the 50S subunit. In Chelativorans sp. (strain BNC1), this protein is Large ribosomal subunit protein uL3.